The primary structure comprises 488 residues: N-succinylglutamate 5-semialdehyde dehydrogenase (488 aa).

Residue 221–226 (GSSRTG) participates in NAD(+) binding. Active-site residues include glutamate 244 and cysteine 278.

Belongs to the aldehyde dehydrogenase family. AstD subfamily.

It carries out the reaction N-succinyl-L-glutamate 5-semialdehyde + NAD(+) + H2O = N-succinyl-L-glutamate + NADH + 2 H(+). The protein operates within amino-acid degradation; L-arginine degradation via AST pathway; L-glutamate and succinate from L-arginine: step 4/5. Catalyzes the NAD-dependent reduction of succinylglutamate semialdehyde into succinylglutamate. The sequence is that of N-succinylglutamate 5-semialdehyde dehydrogenase from Pseudomonas syringae pv. syringae (strain B728a).